Reading from the N-terminus, the 199-residue chain is Protein Maeo_0138 (199 aa).

The AMMECR1 domain occupies 7 to 197 (EEGKFAVKFA…ELSPNGKIVE (191 aa)).

In Methanococcus aeolicus (strain ATCC BAA-1280 / DSM 17508 / OCM 812 / Nankai-3), this protein is Protein Maeo_0138.